The primary structure comprises 142 residues: Large ribosomal subunit protein uL13 (142 aa).

Belongs to the universal ribosomal protein uL13 family. As to quaternary structure, part of the 50S ribosomal subunit.

In terms of biological role, this protein is one of the early assembly proteins of the 50S ribosomal subunit, although it is not seen to bind rRNA by itself. It is important during the early stages of 50S assembly. This chain is Large ribosomal subunit protein uL13, found in Thermococcus kodakarensis (strain ATCC BAA-918 / JCM 12380 / KOD1) (Pyrococcus kodakaraensis (strain KOD1)).